Consider the following 1192-residue polypeptide: Probable ATP-binding protein BrxC (1192 aa).

It belongs to the BrxC family.

In terms of biological role, BREX systems (bacteriophage exclusion) provide immunity against bacteriophage. A core protein of a type 1 BREX system. This system allows phage adsorption but prevents phage DNA replication, without degradation of the phage DNA. Methylation of bacterial DNA by PglX probably guides self/non-self discrimination. When the brxA-brxB-brxC-pglX and pglZ-brxL operons are transformed into a susceptible B.subtilis strain (BEST7003) they confer resistance to bacteriophages SPbeta, SP16, Zeta, phi3T and SP02 and partial protection to phages SP01 and SP82G (these include lytic and temperate phage). They do not protect against phages phi105, rho10 or rho14. Additionally confers a very slight reduction in efficiency of plasmid transformation. The sequence is that of Probable ATP-binding protein BrxC from Bacillus cereus (strain H3081.97).